Consider the following 312-residue polypeptide: Dihydroorotate dehydrogenase B (NAD(+)), catalytic subunit (312 aa).

FMN contacts are provided by residues serine 21 and 45-46 (KA). Residues lysine 45 and 69-73 (NAIGL) each bind substrate. FMN contacts are provided by asparagine 99 and asparagine 127. Asparagine 127 contacts substrate. Cysteine 130 (nucleophile) is an active-site residue. 2 residues coordinate FMN: lysine 165 and isoleucine 191. 192-193 (NT) provides a ligand contact to substrate. FMN contacts are provided by residues glycine 217, 243–244 (GG), and 265–266 (GT).

It belongs to the dihydroorotate dehydrogenase family. Type 1 subfamily. As to quaternary structure, heterotetramer of 2 PyrK and 2 PyrD type B subunits. The cofactor is FMN.

The protein resides in the cytoplasm. The catalysed reaction is (S)-dihydroorotate + NAD(+) = orotate + NADH + H(+). The protein operates within pyrimidine metabolism; UMP biosynthesis via de novo pathway; orotate from (S)-dihydroorotate (NAD(+) route): step 1/1. Functionally, catalyzes the conversion of dihydroorotate to orotate with NAD(+) as electron acceptor. In Anoxybacillus flavithermus (strain DSM 21510 / WK1), this protein is Dihydroorotate dehydrogenase B (NAD(+)), catalytic subunit (pyrD).